The following is a 382-amino-acid chain: Succinate--CoA ligase [ADP-forming] subunit beta (382 aa).

Residues lysine 46, 53 to 55 (GRG), valine 95, and glutamate 100 contribute to the ATP site. The Mg(2+) site is built by asparagine 192 and aspartate 206. Substrate-binding positions include asparagine 257 and 314–316 (GIT).

This sequence belongs to the succinate/malate CoA ligase beta subunit family. Heterotetramer of two alpha and two beta subunits. It depends on Mg(2+) as a cofactor.

It catalyses the reaction succinate + ATP + CoA = succinyl-CoA + ADP + phosphate. The catalysed reaction is GTP + succinate + CoA = succinyl-CoA + GDP + phosphate. It participates in carbohydrate metabolism; tricarboxylic acid cycle; succinate from succinyl-CoA (ligase route): step 1/1. In terms of biological role, succinyl-CoA synthetase functions in the citric acid cycle (TCA), coupling the hydrolysis of succinyl-CoA to the synthesis of either ATP or GTP and thus represents the only step of substrate-level phosphorylation in the TCA. The beta subunit provides nucleotide specificity of the enzyme and binds the substrate succinate, while the binding sites for coenzyme A and phosphate are found in the alpha subunit. The sequence is that of Succinate--CoA ligase [ADP-forming] subunit beta from Bacteroides fragilis (strain ATCC 25285 / DSM 2151 / CCUG 4856 / JCM 11019 / LMG 10263 / NCTC 9343 / Onslow / VPI 2553 / EN-2).